Reading from the N-terminus, the 69-residue chain is uncharacterized protein (69 aa).

The N-terminal stretch at 1-16 (MSLGLIFALLLTHAAA) is a signal peptide.

This is an uncharacterized protein from Archaeoglobus fulgidus (strain ATCC 49558 / DSM 4304 / JCM 9628 / NBRC 100126 / VC-16).